We begin with the raw amino-acid sequence, 185 residues long: Dirigent protein 12 (185 aa).

The N-terminal stretch at 1–25 (MTNQIYKQVFSFFLSVLLLQSSTVS) is a signal peptide. Residues Cys-37 and Cys-184 are joined by a disulfide bond. N-linked (GlcNAc...) asparagine glycosylation is found at Asn-56 and Asn-120.

Belongs to the plant dirigent protein family. Homodimer. As to expression, seed coat specific expression.

The protein resides in the secreted. The protein localises to the extracellular space. It localises to the apoplast. Dirigent proteins impart stereoselectivity on the phenoxy radical-coupling reaction, yielding optically active lignans from two molecules of coniferyl alcohol in the biosynthesis of lignans, flavonolignans, and alkaloids and thus plays a central role in plant secondary metabolism. Required for seed accumulation of neolignans. This is Dirigent protein 12 (DIR12) from Arabidopsis thaliana (Mouse-ear cress).